We begin with the raw amino-acid sequence, 548 residues long: Sterol esterase TGL1 (548 aa).

M1 bears the N-acetylmethionine; partial mark. Residues 1–13 lie on the Lumenal side of the membrane; that stretch reads MYFPFLGRLSITD. Residues 14-34 form a helical membrane-spanning segment; that stretch reads YIIVVLVYIESIISSVLKLIP. The Cytoplasmic segment spans residues 35–548; it reads QPMINLFEWL…TTALDALNKE (514 aa). Residues 107–402 enclose the AB hydrolase-1 domain; that stretch reads VVYLHHGLLM…NYEHLDLIWG (296 aa). The short motif at 199–203 is the GXSXG element; sequence GFSQG. S201 serves as the catalytic Nucleophile. K246 participates in a covalent cross-link: Glycyl lysine isopeptide (Lys-Gly) (interchain with G-Cter in ubiquitin). Residues D369 and H396 each act as charge relay system in the active site. Disordered stretches follow at residues 449–477 and 496–516; these read TTHP…EADE and IDED…HKEQ. Phosphoserine is present on residues S462 and S466. Residues 502–516 show a composition bias toward basic and acidic residues; that stretch reads NEHQDDTEDQIHKEQ. Residues S521 and S538 each carry the phosphoserine modification. The tract at residues 528–548 is disordered; that stretch reads KDLRQLDANSSTTALDALNKE. T539 is subject to Phosphothreonine.

The protein belongs to the AB hydrolase superfamily. Post-translationally, not N-glycosylated.

Its subcellular location is the lipid droplet. The protein localises to the membrane. The catalysed reaction is a sterol ester + H2O = a sterol + a fatty acid + H(+). Its function is as follows. Mediates the hydrolysis of steryl esters (SE). Preferentially hydrolyzes ergosteryl and zymosteryl esters. Required for mobilization of SEs from lipid particles/droplets, thereby playing a central role in lipid metabolism and sterol homeostasis. Sterol intermediates stored in SE and set free by SE hydrolases are recycled to the sterol biosynthetic pathway and converted to the final product, ergosterol, in the endoplasmic reticulum. Also has weak lipase activity toward triglycerides at neutral pH, however, the physiological relevance of this activity is unclear. The protein is Sterol esterase TGL1 (TGL1) of Saccharomyces cerevisiae (strain ATCC 204508 / S288c) (Baker's yeast).